We begin with the raw amino-acid sequence, 300 residues long: Peroxisomal 2,4-dienoyl-CoA reductase [(3E)-enoyl-CoA-producing] (300 aa).

Residues 42–47, 67–71, and Asp93 each bind NADP(+); these read GGGSGI and RNLEK. Arg67 serves as a coordination point for substrate. Substrate-binding positions include Arg95, Phe125, and 133–135; that span reads SFN. NADP(+) is bound by residues Lys189 and 215–221; that span reads PGPISGT. Position 226 (Arg226) interacts with substrate. The short motif at 298–300 is the Microbody targeting signal element; it reads AKL.

The protein belongs to the short-chain dehydrogenases/reductases (SDR) family. 2,4-dienoyl-CoA reductase subfamily. In terms of assembly, monomer, dimer and oligomer.

The protein localises to the peroxisome. The catalysed reaction is a (2E,4Z)-dienoyl-CoA + NADPH + H(+) = a 4,5-saturated-(3E)-enoyl-CoA + NADP(+). It catalyses the reaction a (2E,4E)-dienoyl-CoA + NADPH + H(+) = a 4,5-saturated-(3E)-enoyl-CoA + NADP(+). It carries out the reaction (2E,4E)-hexadienoyl-CoA + NADPH + H(+) = (3E)-hexenoyl-CoA + NADP(+). The enzyme catalyses (2E,4E)-decadienoyl-CoA + NADPH + H(+) = (3E)-decenoyl-CoA + NADP(+). The catalysed reaction is (2E,4Z,7Z,10Z,13Z,16Z,19Z)-docosaheptaenoyl-CoA + NADPH + H(+) = (3E,7Z,10Z,13Z,16Z,19Z)-docosahexaenoyl-CoA + NADP(+). Its function is as follows. Auxiliary enzyme of beta-oxidation. Participates in the degradation of unsaturated fatty enoyl-CoA esters having double bonds in both even- and odd-numbered positions in peroxisome. Catalyzes the NADP-dependent reduction of 2,4-dienoyl-CoA to yield trans-3-enoyl-CoA. The protein is Peroxisomal 2,4-dienoyl-CoA reductase [(3E)-enoyl-CoA-producing] (decr2) of Danio rerio (Zebrafish).